Reading from the N-terminus, the 964-residue chain is Glycine dehydrogenase (decarboxylating) (964 aa).

Lys711 carries the post-translational modification N6-(pyridoxal phosphate)lysine.

It belongs to the GcvP family. In terms of assembly, the glycine cleavage system is composed of four proteins: P, T, L and H. Pyridoxal 5'-phosphate is required as a cofactor.

It carries out the reaction N(6)-[(R)-lipoyl]-L-lysyl-[glycine-cleavage complex H protein] + glycine + H(+) = N(6)-[(R)-S(8)-aminomethyldihydrolipoyl]-L-lysyl-[glycine-cleavage complex H protein] + CO2. The glycine cleavage system catalyzes the degradation of glycine. The P protein binds the alpha-amino group of glycine through its pyridoxal phosphate cofactor; CO(2) is released and the remaining methylamine moiety is then transferred to the lipoamide cofactor of the H protein. The sequence is that of Glycine dehydrogenase (decarboxylating) from Prochlorococcus marinus (strain SARG / CCMP1375 / SS120).